A 276-amino-acid polypeptide reads, in one-letter code: Molybdenum storage protein subunit alpha (276 aa).

As to quaternary structure, octamer consisting of 4 alpha and 4 beta chains.

The protein localises to the cytoplasm. In terms of biological role, intracellular storage of molybdenum. Binds polyoxomolybdates. Can bind at least 90 molybdenum atoms per protein molecule. This Azotobacter vinelandii (strain DJ / ATCC BAA-1303) protein is Molybdenum storage protein subunit alpha.